A 278-amino-acid chain; its full sequence is DNA adenine methylase (278 aa).

Residues Trp10, Lys14, Asp54, and Asp181 each contribute to the S-adenosyl-L-methionine site.

This sequence belongs to the N(4)/N(6)-methyltransferase family.

It catalyses the reaction a 2'-deoxyadenosine in DNA + S-adenosyl-L-methionine = an N(6)-methyl-2'-deoxyadenosine in DNA + S-adenosyl-L-homocysteine + H(+). In terms of biological role, an alpha subtype methylase, recognizes the double-stranded sequence 5'-GATC-3' and methylates A-2. May be involved in methyl-directed DNA mismatch repair, initiation of chromosome replication and gene expression. The sequence is that of DNA adenine methylase (dam) from Escherichia coli O157:H7.